We begin with the raw amino-acid sequence, 449 residues long: GTPase Der (449 aa).

2 consecutive EngA-type G domains span residues 3–167 (SIVA…PDEP) and 175–350 (TNIA…EQYS). GTP is bound by residues 9 to 16 (GRPNVGKS), 56 to 60 (DTGGF), 119 to 122 (NKVD), 181 to 188 (GRPNVGKS), 228 to 232 (DTAGI), and 293 to 296 (NKWD). Residues 351–435 (RRVTTSELNR…PFRLLFRGRE (85 aa)) enclose the KH-like domain.

Belongs to the TRAFAC class TrmE-Era-EngA-EngB-Septin-like GTPase superfamily. EngA (Der) GTPase family. As to quaternary structure, associates with the 50S ribosomal subunit.

Functionally, GTPase that plays an essential role in the late steps of ribosome biogenesis. In Trichlorobacter lovleyi (strain ATCC BAA-1151 / DSM 17278 / SZ) (Geobacter lovleyi), this protein is GTPase Der.